Reading from the N-terminus, the 248-residue chain is Anamorsin homolog (248 aa).

The segment at 4 to 129 (FKGLQKSLYI…ETGSSARLSF (126 aa)) is N-terminal SAM-like domain. Residues 130 to 161 (AKKNANAANVWKISGDDEELIDEEELLDEEDK) are linker. Cysteine 172, cysteine 181, cysteine 184, and cysteine 186 together coordinate [2Fe-2S] cluster. The tract at residues 172–186 (CSTTGKRKACKNCSC) is fe-S binding site A. 4 residues coordinate [4Fe-4S] cluster: cysteine 209, cysteine 212, cysteine 220, and cysteine 223. 2 consecutive short sequence motifs (cx2C motif) follow at residues 209–212 (CGNC) and 220–223 (CSTC). Residues 209 to 223 (CGNCYLGDAFRCSTC) form a fe-S binding site B region.

This sequence belongs to the anamorsin family. As to quaternary structure, monomer. The cofactor is [2Fe-2S] cluster. [4Fe-4S] cluster serves as cofactor.

Its subcellular location is the cytoplasm. The protein resides in the mitochondrion intermembrane space. Its function is as follows. Component of the cytosolic iron-sulfur (Fe-S) protein assembly (CIA) machinery. Required for the maturation of extramitochondrial Fe-S proteins. Part of an electron transfer chain functioning in an early step of cytosolic Fe-S biogenesis, facilitating the de novo assembly of a [4Fe-4S] cluster on the cytosolic Fe-S scaffold complex. Electrons are transferred from NADPH via a FAD- and FMN-containing diflavin oxidoreductase. Together with the diflavin oxidoreductase, also required for the assembly of the diferric tyrosyl radical cofactor of ribonucleotide reductase (RNR), probably by providing electrons for reduction during radical cofactor maturation in the catalytic small subunit. The sequence is that of Anamorsin homolog from Drosophila sechellia (Fruit fly).